The sequence spans 681 residues: DNA-directed RNA polymerase subunit beta' (681 aa).

Zn(2+) contacts are provided by C69, C71, C87, and C90. The Mg(2+) site is built by D489, D491, and D493.

This sequence belongs to the RNA polymerase beta' chain family. RpoC1 subfamily. In plastids the minimal PEP RNA polymerase catalytic core is composed of four subunits: alpha, beta, beta', and beta''. When a (nuclear-encoded) sigma factor is associated with the core the holoenzyme is formed, which can initiate transcription. The cofactor is Mg(2+). Zn(2+) is required as a cofactor.

It localises to the plastid. Its subcellular location is the chloroplast. It carries out the reaction RNA(n) + a ribonucleoside 5'-triphosphate = RNA(n+1) + diphosphate. DNA-dependent RNA polymerase catalyzes the transcription of DNA into RNA using the four ribonucleoside triphosphates as substrates. The protein is DNA-directed RNA polymerase subunit beta' of Nicotiana tomentosiformis (Tobacco).